Here is an 838-residue protein sequence, read N- to C-terminus: V-type proton ATPase 116 kDa subunit a 1 (838 aa).

The Cytoplasmic portion of the chain corresponds to 1 to 388 (MGELFRSEEM…DAYGIGTYRE (388 aa)). Phosphothreonine is present on residues T250 and T360. A Phosphotyrosine modification is found at Y364. Residues 389 to 407 (INPAPYTIITFPFLFAVMF) form a helical membrane-spanning segment. Residues 408 to 409 (GD) lie on the Vacuolar side of the membrane. Residues 410–426 (LGHGILMTLFAVWMVLK) form a helical membrane-spanning segment. The Cytoplasmic portion of the chain corresponds to 427–441 (ESRILSQKNENEMFS). The helical transmembrane segment at 442-471 (TIFSGRYIILLMGVFSIYTGLIYNDCFSKS) threads the bilayer. Residues 472-535 (LNIFGSSWSV…ATNKLTFLNS (64 aa)) lie on the Vacuolar side of the membrane. Residues 536–555 (FKMKMSVILGIIHMLFGVSL) form a helical membrane-spanning segment. The Cytoplasmic segment spans residues 556 to 573 (SLFNHTYFKKPLNIYFGF). A helical transmembrane segment spans residues 574–594 (IPEIIFMTSLFGYLVILIFYK). At 595–639 (WTAYNAKTSEKAPSLLIHFINMFLFSYGDSGNSMLYSGQKGIQCF) the chain is on the vacuolar side. Residues 640-659 (LVVVALLCVPWMLLFKPLVL) form a helical membrane-spanning segment. At 660-725 (RRQYLRRKHL…DTMVHQAIHT (66 aa)) the chain is on the cytoplasmic side. A helical membrane pass occupies residues 726-750 (IEYCLGCISNTASYLRLWALSLAHA). Topologically, residues 751-771 (QLSEVLWTMVIHIGLKVKSLA) are vacuolar. Residues 772-810 (GGLALFFIFAAFATLTVAILLIMEGLSAFLHALRLHWVE) traverse the membrane as a helical segment. The Cytoplasmic portion of the chain corresponds to 811 to 838 (FQNKFYSGTGFKFLPFSFEHIREGKFDD).

Belongs to the V-ATPase 116 kDa subunit family. In terms of assembly, V-ATPase is a heteromultimeric enzyme made up of two complexes: the ATP-hydrolytic V1 complex and the proton translocation V0 complex. The V1 complex consists of three catalytic AB heterodimers that form a heterohexamer, three peripheral stalks each consisting of EG heterodimers, one central rotor including subunits D and F, and the regulatory subunits C and H. The proton translocation complex V0 consists of the proton transport subunit a, a ring of proteolipid subunits c9c'', rotary subunit d, subunits e and f, and the accessory subunits ATP6AP1/Ac45 and ATP6AP2/PRR. Interacts with SPAAR. In terms of tissue distribution, expressed in brain (at protein level). As to expression, expressed heart, kidney, liver, spleen, and to a lesser extent in brain.

The protein localises to the cytoplasmic vesicle. The protein resides in the clathrin-coated vesicle membrane. It is found in the secretory vesicle. It localises to the synaptic vesicle membrane. Its subcellular location is the melanosome. Subunit of the V0 complex of vacuolar(H+)-ATPase (V-ATPase), a multisubunit enzyme composed of a peripheral complex (V1) that hydrolyzes ATP and a membrane integral complex (V0) that translocates protons. V-ATPase is responsible for the acidification of various organelles, such as lysosomes, endosomes, the trans-Golgi network, and secretory granules, including synaptic vesicles. In certain cell types, can be exported to the plasma membrane, where it is involved in the acidification of the extracellular environment. Required for assembly and activity of the vacuolar ATPase. Through its action on compartment acidification, plays an essential role in neuronal development in terms of integrity and connectivity of neurons. The chain is V-type proton ATPase 116 kDa subunit a 1 (ATP6V0A1) from Bos taurus (Bovine).